The primary structure comprises 148 residues: Large ribosomal subunit protein uL11 (148 aa).

The interval 89–108 is disordered; it reads EKKKGSGAHKPGKEKVGQVT.

This sequence belongs to the universal ribosomal protein uL11 family. In terms of assembly, part of the ribosomal stalk of the 50S ribosomal subunit. Interacts with L10 and the large rRNA to form the base of the stalk. L10 forms an elongated spine to which L12 dimers bind in a sequential fashion forming a multimeric L10(L12)X complex. One or more lysine residues are methylated.

Its function is as follows. Forms part of the ribosomal stalk which helps the ribosome interact with GTP-bound translation factors. The sequence is that of Large ribosomal subunit protein uL11 from Anaeromyxobacter sp. (strain Fw109-5).